The sequence spans 622 residues: Elongation factor 4 (622 aa).

The region spanning 17-201 (ALIRNFCIIA…KVVAEVPAPV (185 aa)) is the tr-type G domain. GTP is bound by residues 29–34 (DHGKST) and 148–151 (NKID).

It belongs to the TRAFAC class translation factor GTPase superfamily. Classic translation factor GTPase family. LepA subfamily.

The protein localises to the cell membrane. It catalyses the reaction GTP + H2O = GDP + phosphate + H(+). Required for accurate and efficient protein synthesis under certain stress conditions. May act as a fidelity factor of the translation reaction, by catalyzing a one-codon backward translocation of tRNAs on improperly translocated ribosomes. Back-translocation proceeds from a post-translocation (POST) complex to a pre-translocation (PRE) complex, thus giving elongation factor G a second chance to translocate the tRNAs correctly. Binds to ribosomes in a GTP-dependent manner. In Streptomyces coelicolor (strain ATCC BAA-471 / A3(2) / M145), this protein is Elongation factor 4.